A 469-amino-acid chain; its full sequence is Biotin synthase (469 aa).

Residues 51–278 (MTVKVNYLVN…DKEIRMAGGR (228 aa)) form the Radical SAM core domain. [4Fe-4S] cluster is bound by residues Cys66, Cys70, and Cys73. The [2Fe-2S] cluster site is built by Cys110, Cys143, Cys203, and Arg273. Residues 326-469 (AGPDPSRDRH…GAGTSVAPNA (144 aa)) are disordered. Low complexity-rich tracts occupy residues 363-384 (GSAA…APAD) and 405-428 (AGGP…MSPA).

It belongs to the radical SAM superfamily. Biotin synthase family. In terms of assembly, homodimer. The cofactor is [4Fe-4S] cluster. Requires [2Fe-2S] cluster as cofactor.

It catalyses the reaction (4R,5S)-dethiobiotin + (sulfur carrier)-SH + 2 reduced [2Fe-2S]-[ferredoxin] + 2 S-adenosyl-L-methionine = (sulfur carrier)-H + biotin + 2 5'-deoxyadenosine + 2 L-methionine + 2 oxidized [2Fe-2S]-[ferredoxin]. Its pathway is cofactor biosynthesis; biotin biosynthesis; biotin from 7,8-diaminononanoate: step 2/2. In terms of biological role, catalyzes the conversion of dethiobiotin (DTB) to biotin by the insertion of a sulfur atom into dethiobiotin via a radical-based mechanism. In Kocuria rhizophila (strain ATCC 9341 / DSM 348 / NBRC 103217 / DC2201), this protein is Biotin synthase.